Consider the following 178-residue polypeptide: Conodipine-P3 (178 aa).

A signal peptide spans 1 to 24 (MKLLAPVLWAMAALGVTWLVAVDS). P38 is subject to 4-hydroxyproline. 4-hydroxyproline; partial occurs at positions 42 and 49. H54 is a catalytic residue. The propeptide at 98 to 130 (KREVTSHRATSIAHSRLWKTALDQKSFLNRKAR) is interchain peptide. Q131 bears the Pyrrolidone carboxylic acid mark. P137 carries the post-translational modification 4-hydroxyproline; partial.

This sequence belongs to the phospholipase A2 family. Group IX subfamily. In terms of assembly, heterodimer of an alpha and a beta chain; probably disulfide-linked. Requires Ca(2+) as cofactor. As to expression, expressed by the venom duct.

The protein resides in the secreted. The catalysed reaction is a 1,2-diacyl-sn-glycero-3-phosphocholine + H2O = a 1-acyl-sn-glycero-3-phosphocholine + a fatty acid + H(+). Catalyzes the calcium-dependent hydrolysis of the 2-acyl groups in 3-sn-phosphoglycerides. This Conus purpurascens (Purple cone) protein is Conodipine-P3.